We begin with the raw amino-acid sequence, 357 residues long: U5 small nuclear ribonucleoprotein 40 kDa protein (357 aa).

A Glycyl lysine isopeptide (Lys-Gly) (interchain with G-Cter in SUMO2) cross-link involves residue Lys-18. Position 21 is an asymmetric dimethylarginine (Arg-21). WD repeat units lie at residues Gly-64–Ala-103, Gly-107–Arg-146, Gly-149–Thr-189, Gln-191–Thr-230, Gly-233–Arg-272, Asn-283–Lys-322, and Gly-325–Gln-357. A Glycyl lysine isopeptide (Lys-Gly) (interchain with G-Cter in SUMO2) cross-link involves residue Lys-270.

Component of the pre-catalytic and catalytic spliceosome complexes. Component of the postcatalytic spliceosome P complex. Part of the U5 snRNP complex. Interacts with PRPF8. Component of the U4/U6-U5 tri-snRNP complex composed of the U4, U6 and U5 snRNAs and at least PRPF3, PRPF4, PRPF6, PRPF8, PRPF31, SNRNP200, TXNL4A, WDR57, SNRNP40, DDX23, CD2BP2, PPIH, SNU13, EFTUD2, SART1 and USP39. Component of the minor spliceosome, which splices U12-type introns.

The protein resides in the nucleus. Required for pre-mRNA splicing as component of the activated spliceosome. Component of the U5 small nuclear ribonucleoprotein (snRNP) complex and the U4/U6-U5 tri-snRNP complex, building blocks of the spliceosome. As a component of the minor spliceosome, involved in the splicing of U12-type introns in pre-mRNAs. The chain is U5 small nuclear ribonucleoprotein 40 kDa protein (SNRNP40) from Homo sapiens (Human).